The chain runs to 358 residues: UDP-N-acetylglucosamine--N-acetylmuramyl-(pentapeptide) pyrophosphoryl-undecaprenol N-acetylglucosamine transferase (358 aa).

UDP-N-acetyl-alpha-D-glucosamine is bound by residues 11–13 (TGG), asparagine 124, arginine 164, serine 195, and glutamine 291.

It belongs to the glycosyltransferase 28 family. MurG subfamily.

Its subcellular location is the cell inner membrane. It carries out the reaction di-trans,octa-cis-undecaprenyl diphospho-N-acetyl-alpha-D-muramoyl-L-alanyl-D-glutamyl-meso-2,6-diaminopimeloyl-D-alanyl-D-alanine + UDP-N-acetyl-alpha-D-glucosamine = di-trans,octa-cis-undecaprenyl diphospho-[N-acetyl-alpha-D-glucosaminyl-(1-&gt;4)]-N-acetyl-alpha-D-muramoyl-L-alanyl-D-glutamyl-meso-2,6-diaminopimeloyl-D-alanyl-D-alanine + UDP + H(+). It functions in the pathway cell wall biogenesis; peptidoglycan biosynthesis. Functionally, cell wall formation. Catalyzes the transfer of a GlcNAc subunit on undecaprenyl-pyrophosphoryl-MurNAc-pentapeptide (lipid intermediate I) to form undecaprenyl-pyrophosphoryl-MurNAc-(pentapeptide)GlcNAc (lipid intermediate II). This Leptospira interrogans serogroup Icterohaemorrhagiae serovar copenhageni (strain Fiocruz L1-130) protein is UDP-N-acetylglucosamine--N-acetylmuramyl-(pentapeptide) pyrophosphoryl-undecaprenol N-acetylglucosamine transferase.